We begin with the raw amino-acid sequence, 604 residues long: Elongation factor 4 (604 aa).

Residues 7–189 (SRIRNFSIIA…SIVHLVPPPD (183 aa)) enclose the tr-type G domain. GTP is bound by residues 19 to 24 (DHGKST) and 136 to 139 (NKID).

This sequence belongs to the TRAFAC class translation factor GTPase superfamily. Classic translation factor GTPase family. LepA subfamily.

It is found in the cell inner membrane. The catalysed reaction is GTP + H2O = GDP + phosphate + H(+). Functionally, required for accurate and efficient protein synthesis under certain stress conditions. May act as a fidelity factor of the translation reaction, by catalyzing a one-codon backward translocation of tRNAs on improperly translocated ribosomes. Back-translocation proceeds from a post-translocation (POST) complex to a pre-translocation (PRE) complex, thus giving elongation factor G a second chance to translocate the tRNAs correctly. Binds to ribosomes in a GTP-dependent manner. The protein is Elongation factor 4 of Gloeothece citriformis (strain PCC 7424) (Cyanothece sp. (strain PCC 7424)).